The primary structure comprises 952 residues: Probable RNA-binding protein 19 (952 aa).

Residues 2–79 (SRLIVKNLPN…TRITVEFCKS (78 aa)) form the RRM 1 domain. 3 disordered regions span residues 85 to 126 (KPRA…LEKL), 159 to 267 (KAKT…RGAV), and 367 to 395 (KQAPTARGPPKSTTPWQGRTLGENEEEED). Residues 95–109 (KSSQPKQPSQDSVPS) show a composition bias toward low complexity. The segment covering 163–180 (KASSDYLNFDSDSNSDSG) has biased composition (polar residues). Phosphoserine is present on residues serine 177, serine 179, and serine 183. Acidic residues-rich tracts occupy residues 181-196 (QESEEEPAREDPEEEQ) and 224-251 (SSEDEDEEDSEDEAVNCEEGSEEEEEEG). 2 RRM domains span residues 293 to 368 (YTVK…REKQ) and 400 to 478 (GRLF…PSTI). Lysine 479 is covalently cross-linked (Glycyl lysine isopeptide (Lys-Gly) (interchain with G-Cter in SUMO2)). Positions 481–504 (EASQEANAPGSSYKKKKEAMDKAN) are disordered. One can recognise an RRM 4 domain in the interval 584-656 (TVILAKNLPA…VPLYLEWAPI (73 aa)). A compositionally biased stretch (basic and acidic residues) spans 664 to 679 (QKKDSQHEQPAEKAEV). Residues 664-719 (QKKDSQHEQPAEKAEVEQETVLDPEGEKASVEGAEASTGKMEEEEEEEEEEEEESI) are disordered. Serine 693 is modified (phosphoserine). The span at 705-718 (EEEEEEEEEEEEES) shows a compositional bias: acidic residues. RRM domains lie at 722 to 803 (CTLF…ISER) and 824 to 904 (SKIL…WADS). A phosphoserine mark is found at serine 928 and serine 944.

Belongs to the RRM MRD1 family. In terms of tissue distribution, expressed in the crypts of Lieberkuhn of the intestine (at protein level).

It is found in the nucleus. The protein localises to the nucleolus. Its subcellular location is the nucleoplasm. It localises to the cytoplasm. The protein resides in the chromosome. Functionally, plays a role in embryo pre-implantation development. This Mus musculus (Mouse) protein is Probable RNA-binding protein 19 (Rbm19).